Here is an 89-residue protein sequence, read N- to C-terminus: Small ribosomal subunit protein uS15 (89 aa).

This sequence belongs to the universal ribosomal protein uS15 family. In terms of assembly, part of the 30S ribosomal subunit. Forms a bridge to the 50S subunit in the 70S ribosome, contacting the 23S rRNA.

Its function is as follows. One of the primary rRNA binding proteins, it binds directly to 16S rRNA where it helps nucleate assembly of the platform of the 30S subunit by binding and bridging several RNA helices of the 16S rRNA. Forms an intersubunit bridge (bridge B4) with the 23S rRNA of the 50S subunit in the ribosome. This is Small ribosomal subunit protein uS15 from Vibrio cholerae serotype O1 (strain ATCC 39541 / Classical Ogawa 395 / O395).